The sequence spans 503 residues: Glycerol kinase (503 aa).

Residue Thr17 coordinates ADP. ATP-binding residues include Thr17, Thr18, and Ser19. Thr17 is a binding site for sn-glycerol 3-phosphate. ADP is bound at residue Arg21. Sn-glycerol 3-phosphate-binding residues include Arg87, Glu88, Tyr141, and Asp245. Glycerol-binding residues include Arg87, Glu88, Tyr141, Asp245, and Gln246. The ADP site is built by Thr267 and Gly310. ATP-binding residues include Thr267, Gly310, Gln314, and Gly411. The ADP site is built by Gly411 and Asn415.

This sequence belongs to the FGGY kinase family.

The enzyme catalyses glycerol + ATP = sn-glycerol 3-phosphate + ADP + H(+). It functions in the pathway polyol metabolism; glycerol degradation via glycerol kinase pathway; sn-glycerol 3-phosphate from glycerol: step 1/1. With respect to regulation, inhibited by fructose 1,6-bisphosphate (FBP). Key enzyme in the regulation of glycerol uptake and metabolism. Catalyzes the phosphorylation of glycerol to yield sn-glycerol 3-phosphate. The protein is Glycerol kinase of Pseudomonas tolaasii.